A 310-amino-acid chain; its full sequence is Serine/threonine-protein phosphatase 4 catalytic subunit (310 aa).

The Mn(2+) site is built by Asp53, His55, Asp81, and Asn113. His114 serves as the catalytic Proton donor. 2 residues coordinate Mn(2+): His163 and His237. The residue at position 310 (Leu310) is a Leucine methyl ester.

The protein belongs to the PPP phosphatase family. PP-4 (PP-X) subfamily. As to quaternary structure, catalytic subunit of the histone H2A phosphatase complex (HTP-C) containing PPH3, PSY2 and PSY4. Mn(2+) serves as cofactor.

Its subcellular location is the cytoplasm. The protein resides in the nucleus. The catalysed reaction is O-phospho-L-seryl-[protein] + H2O = L-seryl-[protein] + phosphate. The enzyme catalyses O-phospho-L-threonyl-[protein] + H2O = L-threonyl-[protein] + phosphate. Involved in the dephosphorylation and activation of the transcription factor GLN3 in response to nutrient availability. Forms the histone H2A phosphatase complex in association with the regulatory subunits PSY2 and PSY4, which dephosphorylates H2AS128ph (gamma-H2A) that has been displaced from sites of DNA lesions in the double-stranded DNA break repair process. Dephosphorylation is necessary for efficient recovery from the DNA damage checkpoint. The sequence is that of Serine/threonine-protein phosphatase 4 catalytic subunit (PPH3) from Eremothecium gossypii (strain ATCC 10895 / CBS 109.51 / FGSC 9923 / NRRL Y-1056) (Yeast).